A 434-amino-acid polypeptide reads, in one-letter code: MGDNHGDDKNIEIWKIKKLIKSLEAARGNGTSMISLIMPPRDQVSRVTKMLGDEYGTASNIKSRVNRQSVLGAITSAQQRLKLYNRVPPNGLVLYTGTIVNDEGKEKKVTIDFEPFKPINNTLYLCDNKFHTEALNELLESDDKFGFIVMDGNGTLFGTLSGNTREVLHKFSVDLPKKHGRGGQSALRFARLRMEKRHNYVRKTAELATQYYINPATSQPNVSGLILAGSADFKTELSQSDMFDPRLAAKILNVVDVSYGGENGFNQAIELSSEILANVKFIQEKRLIGKYFEEISQDTGKYVFGVEDTLNALDSGAVETLIVWENLDINRYVLKNSTTGETVIKHLNKEQEANTENFKVDNNDLDVEDKMSLLEWLANECKRFGCALEFVTNKSQEGSQFCRGFGGVGGILRYQLDMTAFDEDLDVYDDDESE.

It belongs to the eukaryotic release factor 1 family. In terms of assembly, heterodimer of two subunits, one of which binds GTP.

The protein localises to the cytoplasm. Directs the termination of nascent peptide synthesis (translation) in response to the termination codons UAA, UAG and UGA. Modulates plant growth and development. The polypeptide is Eukaryotic peptide chain release factor subunit 1-1 (Brassica oleracea var. botrytis (Cauliflower)).